A 427-amino-acid polypeptide reads, in one-letter code: MTAIVDIIGREILDSRGNPTVEVDVVLEDGSVGRAAVPSGASTGAHEAVELRDGDKARYLGKGVQKAVEAVNGELFDALGGMDAEQQVQIDQTMIELDGTPNKGRIGANAILGVSLAAAKAAAASYDMPLYRYVGGTSARTLPVPMMNIVNGGVHADNPIDFQEFMIMPVGAPTFADALRCGSEIFHTLKGELKKAGHNTNVGDEGGFAPNLPSADAALDFVMAAIGKAGYKAGGDVMLALDCAATEFFKDGSYVYGGENKTRSRSEQAKYLADLVARYPIVSIEDGMSEDDMDGWKELTDLIGSKCQLVGDDLFVTNVTRLADGIKNGRANSILIKVNQIGTLTETLAAVEMAHKAGYTAVMSHRSGETEDSTIADLAVATNCGQIKTGSLARADRTAKYNQLLRIEQELGAHAHYAGKAALKALR.

A (2R)-2-phosphoglycerate-binding site is contributed by Gln-163. The active-site Proton donor is Glu-205. Mg(2+)-binding residues include Asp-242, Glu-285, and Asp-312. (2R)-2-phosphoglycerate is bound by residues Lys-337, Arg-366, Ser-367, and Lys-388. Lys-337 acts as the Proton acceptor in catalysis.

The protein belongs to the enolase family. Mg(2+) serves as cofactor.

Its subcellular location is the cytoplasm. It localises to the secreted. The protein resides in the cell surface. The catalysed reaction is (2R)-2-phosphoglycerate = phosphoenolpyruvate + H2O. It participates in carbohydrate degradation; glycolysis; pyruvate from D-glyceraldehyde 3-phosphate: step 4/5. Its function is as follows. Catalyzes the reversible conversion of 2-phosphoglycerate (2-PG) into phosphoenolpyruvate (PEP). It is essential for the degradation of carbohydrates via glycolysis. The protein is Enolase of Rhodopseudomonas palustris (strain ATCC BAA-98 / CGA009).